Here is a 165-residue protein sequence, read N- to C-terminus: Ribosome maturation factor RimM (165 aa).

Residues 94–165 (EDEFYIADLT…YVILNYQREA (72 aa)) enclose the PRC barrel domain.

This sequence belongs to the RimM family. As to quaternary structure, binds ribosomal protein uS19.

It localises to the cytoplasm. Its function is as follows. An accessory protein needed during the final step in the assembly of 30S ribosomal subunit, possibly for assembly of the head region. Essential for efficient processing of 16S rRNA. May be needed both before and after RbfA during the maturation of 16S rRNA. It has affinity for free ribosomal 30S subunits but not for 70S ribosomes. This chain is Ribosome maturation factor RimM, found in Rickettsia rickettsii (strain Sheila Smith).